The primary structure comprises 506 residues: Probable cytochrome P450 519E1 (506 aa).

Residues 1–21 form a helical membrane-spanning segment; sequence MGIGLIILYLLIGLLAYDFTK. A heme-binding site is contributed by Cys453.

The protein belongs to the cytochrome P450 family. The cofactor is heme.

The protein resides in the membrane. In Dictyostelium discoideum (Social amoeba), this protein is Probable cytochrome P450 519E1 (cyp519E1).